The primary structure comprises 123 residues: Crossover junction endodeoxyribonuclease Hjc (123 aa).

Residue glutamate 9 participates in Mg(2+) binding. The active site involves serine 29. Mg(2+)-binding residues include aspartate 33 and glutamate 46.

Belongs to the Holliday junction resolvase Hjc family. As to quaternary structure, homodimer. Probably interacts with PCNA and RadB. Mg(2+) is required as a cofactor. Mn(2+) serves as cofactor.

It carries out the reaction Endonucleolytic cleavage at a junction such as a reciprocal single-stranded crossover between two homologous DNA duplexes (Holliday junction).. Its activity is regulated as follows. Cleavage inhibited by RadB in the absence (but not presence) of ATP. A structure-specific endonuclease that resolves Holliday junction (HJ) intermediates during genetic recombination. Cleaves 4-way DNA junctions introducing paired nicks in opposing strands, leaving a 5'-terminal phosphate and a 3'-terminal hydroxyl group that are subsequently ligated to produce recombinant products. Cleaves both mobile and immobile junctions. Binds 4-way junction DNA, a synthetic Hj, binding is not competed by dsDNA. The protein is Crossover junction endodeoxyribonuclease Hjc of Pyrococcus furiosus (strain ATCC 43587 / DSM 3638 / JCM 8422 / Vc1).